Consider the following 692-residue polypeptide: MRITKPITLYRDLSYFHSLLKSCIHGEISSSPITIFRDLLRSSLTPNHFTMSIFLQATTTSFNSFKLQVEQVQTHLTKSGLDRFVYVKTSLLNLYLKKGCVTSAQMLFDEMPERDTVVWNALICGYSRNGYECDAWKLFIVMLQQGFSPSATTLVNLLPFCGQCGFVSQGRSVHGVAAKSGLELDSQVKNALISFYSKCAELGSAEVLFREMKDKSTVSWNTMIGAYSQSGLQEEAITVFKNMFEKNVEISPVTIINLLSAHVSHEPLHCLVVKCGMVNDISVVTSLVCAYSRCGCLVSAERLYASAKQDSIVGLTSIVSCYAEKGDMDIAVVYFSKTRQLCMKIDAVALVGILHGCKKSSHIDIGMSLHGYAIKSGLCTKTLVVNGLITMYSKFDDVETVLFLFEQLQETPLISWNSVISGCVQSGRASTAFEVFHQMMLTGGLLPDAITIASLLAGCSQLCCLNLGKELHGYTLRNNFENENFVCTALIDMYAKCGNEVQAESVFKSIKAPCTATWNSMISGYSLSGLQHRALSCYLEMREKGLKPDEITFLGVLSACNHGGFVDEGKICFRAMIKEFGISPTLQHYALMVGLLGRACLFTEALYLIWKMDIKPDSAVWGALLSACIIHRELEVGEYVARKMFMLDYKNGGLYVLMSNLYATEAMWDDVVRVRNMMKDNGYDGYLGVSQI.

PPR repeat units lie at residues 12–46, 47–83, 84–114, 115–149, 150–184, 185–215, 216–250, 280–314, 316–345, 346–380, 381–411, 412–447, 448–482, 483–513, 514–548, 549–584, and 585–615; these read DLSYFHSLLKSCIHGEISSSPITIFRDLLRSSLTP, NHFTMSIFLQATTTSFNSFKLQVEQVQTHLTKSGLDR, FVYVKTSLLNLYLKKGCVTSAQMLFDEMPER, DTVVWNALICGYSRNGYECDAWKLFIVMLQQGFSP, SATTLVNLLPFCGQCGFVSQGRSVHGVAAKSGLEL, DSQVKNALISFYSKCAELGSAEVLFREMKDK, STVSWNTMIGAYSQSGLQEEAITVFKNMFEKNVEI, DISVVTSLVCAYSRCGCLVSAERLYASAKQDSIVG, TSIVSCYAEKGDMDIAVVYFSKTRQLCMKI, DAVALVGILHGCKKSSHIDIGMSLHGYAIKSGLCT, KTLVVNGLITMYSKFDDVETVLFLFEQLQET, PLISWNSVISGCVQSGRASTAFEVFHQMMLTGGLLP, DAITIASLLAGCSQLCCLNLGKELHGYTLRNNFEN, ENFVCTALIDMYAKCGNEVQAESVFKSIKAP, CTATWNSMISGYSLSGLQHRALSCYLEMREKGLKP, DEITFLGVLSACNHGGFVDEGKICFRAMIKEFGISP, and TLQHYALMVGLLGRACLFTEALYLIWKMDIK. Residues 620 to 692 are type E motif; degenerate; it reads VWGALLSACI…YDGYLGVSQI (73 aa).

The protein belongs to the PPR family. PCMP-E subfamily.

This is Pentatricopeptide repeat-containing protein At2g04860 (PCMP-E74) from Arabidopsis thaliana (Mouse-ear cress).